The sequence spans 697 residues: Potassium-transporting ATPase ATP-binding subunit (697 aa).

4 helical membrane passes run 55 to 75 (PIMF…FFPS), 79 to 99 (SIPG…VLFA), 245 to 265 (LTLI…YLGF), and 271 to 291 (VLVA…LSAI). Catalysis depends on aspartate 324, which acts as the 4-aspartylphosphate intermediate. ATP contacts are provided by residues aspartate 361, glutamate 365, 393–400 (FKAETRMS), and lysine 412. The Mg(2+) site is built by aspartate 535 and aspartate 539. A run of 3 helical transmembrane segments spans residues 605–625 (FAII…LNIM), 633–653 (AILS…PLAM), and 677–697 (GGVI…GLFI).

It belongs to the cation transport ATPase (P-type) (TC 3.A.3) family. Type IA subfamily. In terms of assembly, the system is composed of three essential subunits: KdpA, KdpB and KdpC.

It is found in the cell membrane. The catalysed reaction is K(+)(out) + ATP + H2O = K(+)(in) + ADP + phosphate + H(+). Functionally, part of the high-affinity ATP-driven potassium transport (or Kdp) system, which catalyzes the hydrolysis of ATP coupled with the electrogenic transport of potassium into the cytoplasm. This subunit is responsible for energy coupling to the transport system and for the release of the potassium ions to the cytoplasm. The chain is Potassium-transporting ATPase ATP-binding subunit from Bacillus cereus (strain AH820).